The following is a 104-amino-acid chain: Large ribosomal subunit protein uL24 (104 aa).

Belongs to the universal ribosomal protein uL24 family. Part of the 50S ribosomal subunit.

One of two assembly initiator proteins, it binds directly to the 5'-end of the 23S rRNA, where it nucleates assembly of the 50S subunit. Its function is as follows. One of the proteins that surrounds the polypeptide exit tunnel on the outside of the subunit. This Alteromonas mediterranea (strain DSM 17117 / CIP 110805 / LMG 28347 / Deep ecotype) protein is Large ribosomal subunit protein uL24.